A 172-amino-acid chain; its full sequence is Centrin-1 (172 aa).

Residues Met1–Gln31 form a disordered region. EF-hand domains lie at Asp28–Glu63, Pro64–Glu99, Asp101–Asn136, and Leu137–Tyr172. Positions 41, 43, 45, 47, and 52 each coordinate Ca(2+). Ca(2+) is bound by residues Asp150, Asp152, Asp154, Glu156, and Glu161.

This sequence belongs to the centrin family. As to quaternary structure, monomer. Interacts with CIMAP3. Interacts with USP49.

It is found in the cytoplasm. It localises to the cytoskeleton. The protein resides in the microtubule organizing center. The protein localises to the centrosome. Its subcellular location is the cell projection. It is found in the cilium. Functionally, plays a fundamental role in microtubule-organizing center structure and function. Plays a role in sperm cilia formation. The polypeptide is Centrin-1 (Homo sapiens (Human)).